The following is a 912-amino-acid chain: uncharacterized protein (912 aa).

Composition is skewed to basic and acidic residues over residues 20–32 (IERL…AEPA) and 39–67 (HEYE…EDKT). The segment at 20–91 (IERLREQGRA…KPTLPQPETD (72 aa)) is disordered. Residues 68 to 77 (RHKKLKHRSR) show a composition bias toward basic residues.

This is an uncharacterized protein from Penicillium chrysogenum virus (isolate Caston/2003) (PcV).